The following is a 776-amino-acid chain: MVPLRSFVLLNGLFFVLLAARTVVTRVIDKDNLDGILETQDGQNLSKEPFNLEETYTADFLAYTFNGTWTSDTTIVYTDTMTGDILQFDVIKQRLTVIVDSSVMDDYIVTHYALSPKGRFLLIGYDFQKGFRHSKFMRYVIYDIELGGYDKIANGMHIALAKWAPLTDDLIYILDNDIYYMRFSNNGFNDVQRVTYDGIVGIVYNGVPDWVYEEEVFHGSSAIWFSPDGSHLAYASFDDRNVQEILYLHYGEPGNLVDQYPTEVKIKYPKAGTSNPVVSLTLVDLHDPTLNKIDLKAPIEVVGTDNVLSNVQWKDFDHVIAMWSNRVQNKTEIVWYNKYGEIVKTLDVVEHEGWVEIKNLFFYKDFVYMRKLQPSGTKAGRFHHVTRYDYTLRSSPIQMDLTPGITEVQDIRAIDHSHGRIYYLATGPGEPSQRNLYSVPVDGSEKPTCISCNVLTPEGNACTYADAIFSPFGQHYVLICQGPDPMIVGIFDNTHKKVYSWENNLSLRSKLARRELPLVKDLYVRANGYESKVRLFLPHNFDESKSYPMLVNVYAGPNTAKIIDVASYGYHAYMTTNRSVIYAYIDGRGSSNKGSKMLFEIYRKLGTVEVEDQISVTRKLQEMFPWIDSKRTGVWGWSYGGFCSAMILAKDLTSVFKCGIAVAPVSSWIYYDSIYTERYMGLPTPEDNLGGYNGTDVSRRVEDIRGKKFMLIHGSGDDNVHYQQSLALAKALEKADIMFEQITYTDEAHALFGVLPHLYHTMDRFWSDCFSLSHAH.

The signal sequence occupies residues 1–19; the sequence is MVPLRSFVLLNGLFFVLLA. 3 N-linked (GlcNAc...) asparagine glycosylation sites follow: N44, N66, and N329. 2 cysteine pairs are disulfide-bonded: C449/C452 and C462/C480. Residues N504 and N577 are each glycosylated (N-linked (GlcNAc...) asparagine). S638 (charge relay system) is an active-site residue. A disulfide bond links C658 and C769. An N-linked (GlcNAc...) asparagine glycan is attached at N693. Active-site charge relay system residues include D717 and H749.

The protein belongs to the peptidase S9B family. DPPIV subfamily. Expressed by the venom gland.

Its subcellular location is the secreted. The enzyme catalyses Release of an N-terminal dipeptide, Xaa-Yaa-|-Zaa-, from a polypeptide, preferentially when Yaa is Pro, provided Zaa is neither Pro nor hydroxyproline.. In terms of biological role, venom dipeptidyl-peptidase which removes N-terminal dipeptides sequentially from polypeptides having unsubstituted N-termini provided that the penultimate residue is proline. May process venom proteins into their active forms and/or modulate the chemotactic activity of immune cells after the insect sting. The chain is Venom dipeptidyl peptidase 4 from Vespa velutina (Asian yellow-legged hornet).